A 177-amino-acid chain; its full sequence is Large ribosomal subunit protein uL6 (177 aa).

It belongs to the universal ribosomal protein uL6 family. In terms of assembly, part of the 50S ribosomal subunit.

Functionally, this protein binds to the 23S rRNA, and is important in its secondary structure. It is located near the subunit interface in the base of the L7/L12 stalk, and near the tRNA binding site of the peptidyltransferase center. This chain is Large ribosomal subunit protein uL6, found in Cupriavidus necator (strain ATCC 17699 / DSM 428 / KCTC 22496 / NCIMB 10442 / H16 / Stanier 337) (Ralstonia eutropha).